The chain runs to 2355 residues: Acetyl-CoA carboxylase 2 (2355 aa).

The 508-residue stretch at 138–645 (PIHSILVATN…HTGWLDSRIA (508 aa)) folds into the Biotin carboxylation domain. Residues 291–485 (GRSLVTVPEE…AAQVAVGMGI (195 aa)) form the ATP-grasp domain. 317 to 374 (CQVVGYPAMIKASWGGGGKGIRKVHNDDEVRALFKQVQGEVPGSPIFIMKVASQSRHL) serves as a coordination point for ATP. Positions 440, 454, and 456 each coordinate Mg(2+). 3 residues coordinate Mn(2+): glutamate 440, glutamate 454, and asparagine 456. Residue arginine 458 is part of the active site. Residues 772–846 (LQNDHDPSKL…QAGELIAKLD (75 aa)) enclose the Biotinyl-binding domain. Lysine 813 carries the post-translational modification N6-biotinyllysine. Phosphothreonine is present on threonine 1133. Phosphoserine is present on serine 1293. The CoA carboxyltransferase N-terminal domain maps to 1593-1932 (QYKPLNNLDR…YVGGPLPVLA (340 aa)). The segment at 1593–2251 (QYKPLNNLDR…ESSLVRNIRK (659 aa)) is carboxyltransferase. Arginine 1841, lysine 2142, and arginine 2144 together coordinate CoA. The 316-residue stretch at 1936 to 2251 (PPERTVEYIP…ESSLVRNIRK (316 aa)) folds into the CoA carboxyltransferase C-terminal domain.

In terms of assembly, homodimer. Biotin serves as cofactor. The cofactor is Mg(2+). Mn(2+) is required as a cofactor. As to expression, widely expressed at low levels.

Its subcellular location is the cytoplasm. It is found in the cytosol. The enzyme catalyses hydrogencarbonate + acetyl-CoA + ATP = malonyl-CoA + ADP + phosphate + H(+). It carries out the reaction N(6)-biotinyl-L-lysyl-[protein] + hydrogencarbonate + ATP = N(6)-carboxybiotinyl-L-lysyl-[protein] + ADP + phosphate + H(+). It participates in lipid metabolism; malonyl-CoA biosynthesis; malonyl-CoA from acetyl-CoA: step 1/1. Multifunctional enzyme that catalyzes the carboxylation of acetyl-CoA, forming malonyl-CoA, which is used in the plastid for fatty acid synthesis and in the cytosol in various biosynthetic pathways including fatty acid elongation. This is Acetyl-CoA carboxylase 2 (ACC2) from Arabidopsis thaliana (Mouse-ear cress).